The sequence spans 436 residues: MKKTHITEQKFADLDLLPQVIEGLEKKGFDYCTPIQALALPVLLTGQDIAGQAQTGTGKTLAFLTATFNHLLKTPEHEGRKPNQPRAIIMAPTRELAIQIYNDADSLVASTGIKAALAYGGESYDKQLGKIEEGADILIGTTGRIIDFYKQKVFNLNHIQAVVLDEADRMFDLGFIKDIRFLFRRMPEPKDRLNMLFSATLSYRVQELAFEHMHNPEHVVVEPERKTGHRIQEELFYPSNEHKMALLQTLIEEEWPDRAIIFANTKHKCESVWGHLAADGHRVGLLTGDVPQKKREKILEQFTKGDVDLLVATDVAARGLHIPQVTHVFNFDLPDDCEDYVHRIGRTGRAGESGHSISFACEDYAINLPPIEEYIEHAIPMSDYDASALLEDLPAPMRLRTRNPQQRRSNNNGPRNGNRKPNQNRRPRQPRHNKEA.

The short motif at 9–37 is the Q motif element; the sequence is QKFADLDLLPQVIEGLEKKGFDYCTPIQA. Positions 40–219 constitute a Helicase ATP-binding domain; it reads LPVLLTGQDI…FEHMHNPEHV (180 aa). Residue 53-60 participates in ATP binding; it reads AQTGTGKT. The DEAD box signature appears at 165-168; that stretch reads DEAD. The region spanning 245 to 390 is the Helicase C-terminal domain; sequence ALLQTLIEEE…MSDYDASALL (146 aa). Positions 398-436 are disordered; that stretch reads RLRTRNPQQRRSNNNGPRNGNRKPNQNRRPRQPRHNKEA. Residues 402–421 are compositionally biased toward low complexity; that stretch reads RNPQQRRSNNNGPRNGNRKP. A compositionally biased stretch (basic residues) spans 422 to 436; it reads NQNRRPRQPRHNKEA.

The protein belongs to the DEAD box helicase family. RhlB subfamily. As to quaternary structure, component of the RNA degradosome, which is a multiprotein complex involved in RNA processing and mRNA degradation.

The protein resides in the cytoplasm. The enzyme catalyses ATP + H2O = ADP + phosphate + H(+). Functionally, DEAD-box RNA helicase involved in RNA degradation. Has RNA-dependent ATPase activity and unwinds double-stranded RNA. The sequence is that of ATP-dependent RNA helicase RhlB from Vibrio atlanticus (strain LGP32) (Vibrio splendidus (strain Mel32)).